Reading from the N-terminus, the 570-residue chain is RNA polymerase I termination factor (570 aa).

The span at 1 to 16 shows a compositional bias: polar residues; it reads MDSVSNLKSTNFQNNN. Disordered stretches follow at residues 1–21, 37–68, and 100–138; these read MDSVSNLKSTNFQNNNDPKES, HIKKTKKKLKKQKKRKHGSKMSHEDEDTDMDW, and SSMREKDKRSCHKKSSNSRSERKKHRKRKSSKERKAKIK. The segment covering 37–56 has biased composition (basic residues); it reads HIKKTKKKLKKQKKRKHGSK. Thr-64 carries the post-translational modification Phosphothreonine. Over residues 108-137 the composition is skewed to basic residues; the sequence is RSCHKKSSNSRSERKKHRKRKSSKERKAKI. In terms of domain architecture, Myb-like 1 spans 273 to 339; the sequence is KFTPSEENAL…SIYKHIRRKY (67 aa). In terms of domain architecture, HTH myb-type spans 340–391; that stretch reads HIFEQRGKWTPEEDQELARLCLEKEGHWTEVGKLLGRMPEDCRDRWRNYMKC. Residues 367 to 389 constitute a DNA-binding region (H-T-H motif); it reads WTEVGKLLGRMPEDCRDRWRNYM. Myb-like domains follow at residues 392-486 and 493-549; these read GSKR…NKLV and SMLS…MREK.

Interacts with FOB1. Interacts with the RENT complex subunits NET1 and SIR2.

The protein localises to the nucleus. It localises to the nucleolus. DNA-binding protein that recognizes sequence-specific replication termini (Ter sites) within rDNA. Binds to rDNA terminator elements and mediates efficient RNA polymerase I transcription termination. Required for rDNA silencing at the non-transcribed spacer 1 (NTS1). Promotes the association of SIR2 with NTS1 and contributes to maintenance of rDNA stability. The sequence is that of RNA polymerase I termination factor from Saccharomyces cerevisiae (strain ATCC 204508 / S288c) (Baker's yeast).